Here is a 297-residue protein sequence, read N- to C-terminus: Lipoyl synthase (297 aa).

Positions 40, 45, 51, 67, 71, 74, and 280 each coordinate [4Fe-4S] cluster. Residues 53–269 (AVRKTATFMI…KEIALSKGFS (217 aa)) form the Radical SAM core domain.

The protein belongs to the radical SAM superfamily. Lipoyl synthase family. [4Fe-4S] cluster serves as cofactor.

The protein resides in the cytoplasm. The catalysed reaction is [[Fe-S] cluster scaffold protein carrying a second [4Fe-4S](2+) cluster] + N(6)-octanoyl-L-lysyl-[protein] + 2 oxidized [2Fe-2S]-[ferredoxin] + 2 S-adenosyl-L-methionine + 4 H(+) = [[Fe-S] cluster scaffold protein] + N(6)-[(R)-dihydrolipoyl]-L-lysyl-[protein] + 4 Fe(3+) + 2 hydrogen sulfide + 2 5'-deoxyadenosine + 2 L-methionine + 2 reduced [2Fe-2S]-[ferredoxin]. It functions in the pathway protein modification; protein lipoylation via endogenous pathway; protein N(6)-(lipoyl)lysine from octanoyl-[acyl-carrier-protein]. Functionally, catalyzes the radical-mediated insertion of two sulfur atoms into the C-6 and C-8 positions of the octanoyl moiety bound to the lipoyl domains of lipoate-dependent enzymes, thereby converting the octanoylated domains into lipoylated derivatives. In Bacillus cereus (strain ATCC 14579 / DSM 31 / CCUG 7414 / JCM 2152 / NBRC 15305 / NCIMB 9373 / NCTC 2599 / NRRL B-3711), this protein is Lipoyl synthase.